A 457-amino-acid chain; its full sequence is Multidrug resistance protein MdtK (457 aa).

12 consecutive transmembrane segments (helical) span residues 11 to 31 (LLALAIPVILAQIAQTAMGFV), 53 to 73 (IWLPAILFGHGLLLALTPVIA), 93 to 113 (WLAGFVSVLIMLVLWNAGYII), 127 to 147 (AVGYLRALLWGAPGYLFFQVA), 160 to 180 (GMVMGFIGLLVNIPVNYIFIY), 189 to 209 (GGVGCGVATAAVYWVMFLAMV), 243 to 263 (LPIALALFFEVTLFAVVALLV), 276 to 296 (IALNFSSLMFVLPMSLAAAVT), 314 to 334 (AARTGLMVGVCMATLTAIFTV), 350 to 370 (VVTLAAHLMLLAAVYQISDSI), 387 to 407 (IFYITFTAYWVLGLPSGYILA), and 418 to 438 (PAGFWIGFIIGLTSAAIMMML).

Belongs to the multi antimicrobial extrusion (MATE) (TC 2.A.66.1) family. MdtK subfamily.

The protein resides in the cell inner membrane. Multidrug efflux pump that functions probably as a Na(+)/drug antiporter. This chain is Multidrug resistance protein MdtK, found in Escherichia coli (strain SE11).